A 1995-amino-acid polypeptide reads, in one-letter code: uncharacterized protein (1995 aa).

Helical transmembrane passes span 31 to 51, 53 to 73, 106 to 126, 157 to 177, 212 to 232, 254 to 274, and 307 to 327; these read NYTE…EFFK, FFSF…PDIA, LVIF…ILPT, FLWL…WLSL, IFLL…PFIS, FLLI…SLLQ, and ILNF…IPYY. Disordered regions lie at residues 1418-1441 and 1848-1883; these read SLKK…HQFS and DLRW…KTNP. Composition is skewed to basic residues over residues 1422 to 1441 and 1853 to 1863; these read SQIK…HQFS and PSSRTKQKRKD.

Belongs to the ycf78 family.

The protein resides in the plastid. It localises to the chloroplast membrane. Functionally, essential for cell growth. May be involved in binding chloroplast DNA to either the chloroplast envelope or the thylakoid membrane. This is an uncharacterized protein from Chlamydomonas reinhardtii (Chlamydomonas smithii).